Reading from the N-terminus, the 391-residue chain is S-adenosylmethionine synthase 1 (391 aa).

Glutamate 9 provides a ligand contact to Mg(2+). Histidine 15 is an ATP binding site. Glutamate 43 provides a ligand contact to K(+). Positions 56 and 99 each coordinate L-methionine. ATP is bound by residues 167 to 169 (DGK), 235 to 238 (SGRF), aspartate 246, 252 to 253 (RK), alanine 269, lysine 273, and lysine 277. Aspartate 246 contacts L-methionine. Lysine 277 lines the L-methionine pocket.

This sequence belongs to the AdoMet synthase family. As to quaternary structure, homotetramer. Requires Mn(2+) as cofactor. Mg(2+) serves as cofactor. Co(2+) is required as a cofactor. It depends on K(+) as a cofactor.

Its subcellular location is the cytoplasm. The enzyme catalyses L-methionine + ATP + H2O = S-adenosyl-L-methionine + phosphate + diphosphate. It functions in the pathway amino-acid biosynthesis; S-adenosyl-L-methionine biosynthesis; S-adenosyl-L-methionine from L-methionine: step 1/1. Catalyzes the formation of S-adenosylmethionine from methionine and ATP. The reaction comprises two steps that are both catalyzed by the same enzyme: formation of S-adenosylmethionine (AdoMet) and triphosphate, and subsequent hydrolysis of the triphosphate. The protein is S-adenosylmethionine synthase 1 (METK1) of Vitis vinifera (Grape).